The primary structure comprises 182 residues: ATP synthase subunit delta (182 aa).

Belongs to the ATPase delta chain family. In terms of assembly, F-type ATPases have 2 components, F(1) - the catalytic core - and F(0) - the membrane proton channel. F(1) has five subunits: alpha(3), beta(3), gamma(1), delta(1), epsilon(1). F(0) has three main subunits: a(1), b(2) and c(10-14). The alpha and beta chains form an alternating ring which encloses part of the gamma chain. F(1) is attached to F(0) by a central stalk formed by the gamma and epsilon chains, while a peripheral stalk is formed by the delta and b chains.

The protein localises to the cell membrane. In terms of biological role, f(1)F(0) ATP synthase produces ATP from ADP in the presence of a proton or sodium gradient. F-type ATPases consist of two structural domains, F(1) containing the extramembraneous catalytic core and F(0) containing the membrane proton channel, linked together by a central stalk and a peripheral stalk. During catalysis, ATP synthesis in the catalytic domain of F(1) is coupled via a rotary mechanism of the central stalk subunits to proton translocation. This protein is part of the stalk that links CF(0) to CF(1). It either transmits conformational changes from CF(0) to CF(1) or is implicated in proton conduction. This Alkalihalophilus pseudofirmus (strain ATCC BAA-2126 / JCM 17055 / OF4) (Bacillus pseudofirmus) protein is ATP synthase subunit delta.